Here is a 196-residue protein sequence, read N- to C-terminus: Adenylate kinase (196 aa).

9 to 17 (GIPGVGKST) is a binding site for ATP.

The protein belongs to the archaeal adenylate kinase family.

The protein resides in the cytoplasm. It carries out the reaction AMP + ATP = 2 ADP. The polypeptide is Adenylate kinase (Thermococcus sibiricus (strain DSM 12597 / MM 739)).